Here is a 224-residue protein sequence, read N- to C-terminus: MVDRPLKQRFVLDTSLFLTPEIRSGDEDLEAACLDLLDLISEAKLVHNISCYMPPSIQAELTTMLEDRAISDEVLTKLDTWVITKSPAHHEVRIPADLVYEFIDEMSERVDRGLRVSEKAVRKAEESRAETVEEHDHMTEVDKVISDLRDEYRDTLRQGVLDSREDFDLLILAQELDAGVVTEDQGIINWAEDFGLRYLKGRNFPPLLREYLAADDPDRWRDES.

It belongs to the HARP family.

It catalyses the reaction Endonucleolytic cleavage of RNA, removing 5'-extranucleotides from tRNA precursor.. In terms of biological role, RNA-free RNase P that catalyzes the removal of the 5'-leader sequence from pre-tRNA to produce the mature 5'-terminus. In Haloarcula marismortui (strain ATCC 43049 / DSM 3752 / JCM 8966 / VKM B-1809) (Halobacterium marismortui), this protein is RNA-free ribonuclease P.